Reading from the N-terminus, the 415-residue chain is Multidrug resistance protein MdtA (415 aa).

Positions 1–21 are cleaved as a signal peptide; sequence MKGSYKSRWVIVIVVVIAAIA. Disordered regions lie at residues 32–60 and 392–415; these read SRSA…GPLA and EAQS…GARS. Over residues 399–415 the composition is skewed to basic and acidic residues; that stretch reads PEEKATSREYAKKGARS.

The protein belongs to the membrane fusion protein (MFP) (TC 8.A.1) family. Part of a tripartite efflux system composed of MdtA, MdtB and MdtC.

It localises to the cell inner membrane. Functionally, the MdtABC tripartite complex confers resistance against novobiocin and deoxycholate. The chain is Multidrug resistance protein MdtA from Escherichia coli (strain 55989 / EAEC).